We begin with the raw amino-acid sequence, 403 residues long: cAMP-dependent protein kinase regulatory subunit (403 aa).

A dimerization and phosphorylation region spans residues 1–155; sequence MADYTIPSEL…RIQASIGNNF (155 aa). The disordered stretch occupies residues 79 to 125; the sequence is YAYSTDDGFGTEDDDDDDDDEDDEAAIPPPVVNRGRRTSVSAESMAP. Residues 87 to 103 show a composition bias toward acidic residues; it reads FGTEDDDDDDDDEDDEA. Ser-117 carries the post-translational modification Phosphoserine. 3',5'-cyclic AMP contacts are provided by residues 156-278, Glu-226, Arg-235, 279-403, Glu-349, and Arg-358; these read LFRN…EEVP and LLSS…PGEH.

This sequence belongs to the cAMP-dependent kinase regulatory chain family. As to quaternary structure, tetramer, composed of 2 regulatory (R) and 2 catalytic (C) subunits. In the presence of cAMP it dissociates into 2 active monomeric C subunits and an R dimer that binds four cAMP molecules.

This is cAMP-dependent protein kinase regulatory subunit (PKAR) from Blastocladiella emersonii (Aquatic fungus).